Here is a 299-residue protein sequence, read N- to C-terminus: Probable lipid kinase YegS-like (299 aa).

The 132-residue stretch at 2-133 (ATFPASLLIL…IDIAQVNDKT (132 aa)) folds into the DAGKc domain. Residues Thr-40, 66 to 72 (GDGTINE), and Thr-95 each bind ATP. Mg(2+) contacts are provided by Leu-215, Asp-218, and Leu-220. Residue Glu-271 is the Proton acceptor of the active site.

It belongs to the diacylglycerol/lipid kinase family. YegS lipid kinase subfamily. Mg(2+) is required as a cofactor. Requires Ca(2+) as cofactor.

It localises to the cytoplasm. In terms of biological role, probably phosphorylates lipids; the in vivo substrate is unknown. The polypeptide is Probable lipid kinase YegS-like (Citrobacter koseri (strain ATCC BAA-895 / CDC 4225-83 / SGSC4696)).